The sequence spans 558 residues: Cytochrome c oxidase subunit 1-beta (558 aa).

Residues 1 to 28 (MADAAVHGHGDHHDTRGFFTRWFMSTNH) are Cytoplasmic-facing. A helical transmembrane segment spans residues 29–59 (KDIGILYLFTAGIVGLISVCFTVYMRMELQH). Topologically, residues 60–82 (PGVQYMCLEGARLIADASAECTP) are periplasmic. Cys-66 and Cys-80 are joined by a disulfide. Residues 83–120 (NGHLWNVMITYHGVLMMFFVVIPALFGGFGNYFMPLHI) traverse the membrane as a helical segment. His-94 is a binding site for Fe(II)-heme a. The Cytoplasmic portion of the chain corresponds to 121 to 126 (GAPDMA). A helical transmembrane segment spans residues 127-151 (FPRLNNLSYWMYVCGVALGVASLLA). At 152–176 (PGGNDQMGSGVGWVLYPPLSTTEAG) the chain is on the periplasmic side. The helical transmembrane segment at 177 to 206 (YSMDLAIFAVHVSGASSILGAINIITTFLN) threads the bilayer. The Cytoplasmic portion of the chain corresponds to 207–217 (MRAPGMTLFKV). A helical transmembrane segment spans residues 218-251 (PLFAWSVFITAWLILLSLPVLAGAITMLLMDRNF). Over 252 to 262 (GTQFFDPAGGG) the chain is Periplasmic. Residues 263-299 (DPVLYQHILWFFGHPEVYIIILPGFGIISHVISTFAK) form a helical membrane-spanning segment. 2 residues coordinate Cu cation: His-276 and Tyr-280. The 1'-histidyl-3'-tyrosine (His-Tyr) cross-link spans 276-280 (HPEVY). Topologically, residues 300–303 (KPIF) are cytoplasmic. The helical transmembrane segment at 304–331 (GYLPMVLAMAAIGILGFVVWAHHMYTAG) threads the bilayer. The Cu cation site is built by His-325 and His-326. Residue Met-332 is a topological domain, periplasmic. The chain crosses the membrane as a helical span at residues 333–364 (SLTQQAYFMLATMTIAVPTGIKVFSWIATMWG). At 365–369 (GSIEF) the chain is on the cytoplasmic side. Residues 370 to 395 (KTPMLWAFGFLFLFTVGGVTGVVLSQ) form a helical membrane-spanning segment. Residues 396 to 404 (APLDRVYHD) lie on the Periplasmic side of the membrane. Residues 405-437 (TYYVVAHFHYVMSLGAVFGIFAGVYYWIGKMSG) form a helical membrane-spanning segment. Residue His-411 coordinates heme a3. Residue His-413 coordinates Fe(II)-heme a. Residues 438-440 (RQY) are Cytoplasmic-facing. The helical transmembrane segment at 441–469 (PEWAGQLHFWMMFIGSNLIFFPQHFLGRQ) threads the bilayer. The Periplasmic portion of the chain corresponds to 470-478 (GMPRRYIDY). Residues 479–514 (PVEFAYWNNISSIGAYISFASFLFFIGIVFYTLFAG) form a helical membrane-spanning segment. Residues 515 to 558 (KRVNVPNYWNEHADTLEWTLPSPPPEHTFETLPKREDWDRAHAH) lie on the Cytoplasmic side of the membrane.

The protein belongs to the heme-copper respiratory oxidase family. Requires Cu(2+) as cofactor. It depends on heme as a cofactor. Post-translationally, his-276 and Tyr-280 are involved in the formation of a copper-coordinated covalent cross-link at the active site of the catalytic subunit I.

The protein localises to the cell inner membrane. It carries out the reaction 4 Fe(II)-[cytochrome c] + O2 + 8 H(+)(in) = 4 Fe(III)-[cytochrome c] + 2 H2O + 4 H(+)(out). Its pathway is energy metabolism; oxidative phosphorylation. Its function is as follows. Subunit I and II form the functional core of the enzyme complex. Electrons originating in cytochrome c are transferred via heme a and Cu(A) to the binuclear center formed by heme a3 and Cu(B). This cytochrome c oxidase shows proton pump activity across the membrane in addition to the electron transfer. The polypeptide is Cytochrome c oxidase subunit 1-beta (ctaDII) (Paracoccus denitrificans).